A 598-amino-acid chain; its full sequence is Elongation factor 4 (598 aa).

One can recognise a tr-type G domain in the interval 3 to 185 (QHIRNFSIIA…MIVARIPPPE (183 aa)). GTP contacts are provided by residues 15–20 (DHGKST) and 132–135 (NKID).

Belongs to the TRAFAC class translation factor GTPase superfamily. Classic translation factor GTPase family. LepA subfamily.

It localises to the cell inner membrane. It catalyses the reaction GTP + H2O = GDP + phosphate + H(+). Its function is as follows. Required for accurate and efficient protein synthesis under certain stress conditions. May act as a fidelity factor of the translation reaction, by catalyzing a one-codon backward translocation of tRNAs on improperly translocated ribosomes. Back-translocation proceeds from a post-translocation (POST) complex to a pre-translocation (PRE) complex, thus giving elongation factor G a second chance to translocate the tRNAs correctly. Binds to ribosomes in a GTP-dependent manner. The protein is Elongation factor 4 of Nitrosomonas eutropha (strain DSM 101675 / C91 / Nm57).